A 174-amino-acid chain; its full sequence is Small ribosomal subunit protein uS4 (174 aa).

The S4 RNA-binding domain occupies 105 to 169 (RRLQTVAYRK…SPLADDLHPE (65 aa)).

The protein belongs to the universal ribosomal protein uS4 family. As to quaternary structure, part of the 30S ribosomal subunit. Contacts protein S5. The interaction surface between S4 and S5 is involved in control of translational fidelity.

Functionally, one of the primary rRNA binding proteins, it binds directly to 16S rRNA where it nucleates assembly of the body of the 30S subunit. With S5 and S12 plays an important role in translational accuracy. This Natronomonas pharaonis (strain ATCC 35678 / DSM 2160 / CIP 103997 / JCM 8858 / NBRC 14720 / NCIMB 2260 / Gabara) (Halobacterium pharaonis) protein is Small ribosomal subunit protein uS4.